A 225-amino-acid chain; its full sequence is PKHD-type hydroxylase YbiX (225 aa).

Positions 78–177 constitute a Fe2OG dioxygenase domain; sequence TLSTPLFNRY…RVASFMWIQS (100 aa). Fe cation-binding residues include histidine 96, aspartate 98, and histidine 158. Position 168 (arginine 168) interacts with 2-oxoglutarate.

The cofactor is Fe(2+). L-ascorbate serves as cofactor.

The polypeptide is PKHD-type hydroxylase YbiX (Escherichia coli (strain SMS-3-5 / SECEC)).